The primary structure comprises 992 residues: Probable translation initiation factor IF-2 (992 aa).

The 125-residue stretch at 96-220 (KNWHGVTVTP…LSLALLRFGI (125 aa)) folds into the DOD-type homing endonuclease domain. Residues 399-616 (TTETHNFIAN…LIAGLSQRYL (218 aa)) enclose the tr-type G domain. GTP-binding positions include 472–476 (DTPGH) and 526–529 (NKID).

It belongs to the TRAFAC class translation factor GTPase superfamily. Classic translation factor GTPase family. IF-2 subfamily. This protein undergoes a protein self splicing that involves a post-translational excision of the intervening region (intein) followed by peptide ligation.

Function in general translation initiation by promoting the binding of the formylmethionine-tRNA to ribosomes. Seems to function along with eIF-2. This Pyrococcus abyssi (strain GE5 / Orsay) protein is Probable translation initiation factor IF-2 (infB).